The chain runs to 130 residues: Ribonuclease P protein component (130 aa).

It belongs to the RnpA family. Consists of a catalytic RNA component (M1 or rnpB) and a protein subunit.

It catalyses the reaction Endonucleolytic cleavage of RNA, removing 5'-extranucleotides from tRNA precursor.. In terms of biological role, RNaseP catalyzes the removal of the 5'-leader sequence from pre-tRNA to produce the mature 5'-terminus. It can also cleave other RNA substrates such as 4.5S RNA. The protein component plays an auxiliary but essential role in vivo by binding to the 5'-leader sequence and broadening the substrate specificity of the ribozyme. This Desulfovibrio desulfuricans (strain ATCC 27774 / DSM 6949 / MB) protein is Ribonuclease P protein component.